Reading from the N-terminus, the 238-residue chain is Ribosomal RNA small subunit methyltransferase G (238 aa).

Residues glycine 77, phenylalanine 82, 128–129 (AE), and arginine 147 each bind S-adenosyl-L-methionine. The tract at residues 219–238 (KKTPARYPRKPGTPNKQPIQ) is disordered.

It belongs to the methyltransferase superfamily. RNA methyltransferase RsmG family.

The protein resides in the cytoplasm. Its function is as follows. Specifically methylates the N7 position of guanine in position 535 of 16S rRNA. This chain is Ribosomal RNA small subunit methyltransferase G, found in Geobacillus thermodenitrificans (strain NG80-2).